A 74-amino-acid chain; its full sequence is Pelophylaxin-2 (74 aa).

The signal sequence occupies residues 1–22; that stretch reads MFTMKKSLLFFFFLGTIALSLC. A propeptide spanning residues 23 to 42 is cleaved from the precursor; that stretch reads EEERGADEEENGAEITDEEV. Cys68 and Cys74 are joined by a disulfide.

In terms of tissue distribution, expressed by the skin glands.

It localises to the secreted. Antimicrobial peptide. The sequence is that of Pelophylaxin-2 from Pelophylax fukienensis (Fukien gold-striped pond frog).